The following is a 298-amino-acid chain: DegV domain-containing protein UU535 (298 aa).

In terms of domain architecture, DegV spans 5 to 287; it reads FLIMTDSSTT…KGALGIQVIA (283 aa). Hexadecanoate contacts are provided by Ser-65 and Ser-96.

Functionally, may bind long-chain fatty acids, such as palmitate, and may play a role in lipid transport or fatty acid metabolism. In Ureaplasma parvum serovar 3 (strain ATCC 700970), this protein is DegV domain-containing protein UU535.